The following is a 327-amino-acid chain: Phenylalanine--tRNA ligase alpha subunit (327 aa).

E253 lines the Mg(2+) pocket.

Belongs to the class-II aminoacyl-tRNA synthetase family. Phe-tRNA synthetase alpha subunit type 1 subfamily. In terms of assembly, tetramer of two alpha and two beta subunits. Mg(2+) serves as cofactor.

The protein resides in the cytoplasm. It catalyses the reaction tRNA(Phe) + L-phenylalanine + ATP = L-phenylalanyl-tRNA(Phe) + AMP + diphosphate + H(+). In Laribacter hongkongensis (strain HLHK9), this protein is Phenylalanine--tRNA ligase alpha subunit.